The following is a 367-amino-acid chain: Carbamoyl phosphate synthase small chain (367 aa).

Residues 1–182 (MKLENKKGYL…PIFHPNTGDM (182 aa)) form a CPSase region. L-glutamine is bound by residues Ser-50, Gly-230, and Gly-232. Residues 182–367 (MIVVVDCGIK…DKFRTMVTGK (186 aa)) form the Glutamine amidotransferase type-1 domain. Cys-258 (nucleophile) is an active-site residue. 5 residues coordinate L-glutamine: Leu-259, Gln-262, Asn-300, Gly-302, and Tyr-303. Active-site residues include His-343 and Glu-345.

This sequence belongs to the CarA family. As to quaternary structure, composed of two chains; the small (or glutamine) chain promotes the hydrolysis of glutamine to ammonia, which is used by the large (or ammonia) chain to synthesize carbamoyl phosphate. Tetramer of heterodimers (alpha,beta)4.

The enzyme catalyses hydrogencarbonate + L-glutamine + 2 ATP + H2O = carbamoyl phosphate + L-glutamate + 2 ADP + phosphate + 2 H(+). It catalyses the reaction L-glutamine + H2O = L-glutamate + NH4(+). Its pathway is amino-acid biosynthesis; L-arginine biosynthesis; carbamoyl phosphate from bicarbonate: step 1/1. It participates in pyrimidine metabolism; UMP biosynthesis via de novo pathway; (S)-dihydroorotate from bicarbonate: step 1/3. Its function is as follows. Small subunit of the glutamine-dependent carbamoyl phosphate synthetase (CPSase). CPSase catalyzes the formation of carbamoyl phosphate from the ammonia moiety of glutamine, carbonate, and phosphate donated by ATP, constituting the first step of 2 biosynthetic pathways, one leading to arginine and/or urea and the other to pyrimidine nucleotides. The small subunit (glutamine amidotransferase) binds and cleaves glutamine to supply the large subunit with the substrate ammonia. In Saccharolobus solfataricus (strain ATCC 35092 / DSM 1617 / JCM 11322 / P2) (Sulfolobus solfataricus), this protein is Carbamoyl phosphate synthase small chain.